Here is a 291-residue protein sequence, read N- to C-terminus: Gamma-sarcoglycan (291 aa).

The helical; Signal-anchor for type II membrane protein transmembrane segment at 38 to 58 (LFVLLLLIVLLVNFALTIWIL) threads the bilayer. At 59 to 291 (RVMWFSPVGM…TCHEHSHLCL (233 aa)) the chain is on the extracellular side. Asn-110 carries N-linked (GlcNAc...) asparagine glycosylation. 2 disulfide bridges follow: Cys-265/Cys-290 and Cys-267/Cys-283.

This sequence belongs to the sarcoglycan beta/delta/gamma/zeta family. Interacts with the syntrophin SNTA1. Cross-link to form 2 major subcomplexes: one consisting of SGCB, SGCD and SGCG and the other consisting of SGCB and SGCD. The association between SGCB and SGCG is particularly strong while SGCA is loosely associated with the other sarcoglycans. Interacts with FLNC. Disulfide bonds are present.

It is found in the cell membrane. The protein localises to the sarcolemma. The protein resides in the cytoplasm. Its subcellular location is the cytoskeleton. Component of the sarcoglycan complex, a subcomplex of the dystrophin-glycoprotein complex which forms a link between the F-actin cytoskeleton and the extracellular matrix. The chain is Gamma-sarcoglycan (SGCG) from Bos taurus (Bovine).